A 548-amino-acid polypeptide reads, in one-letter code: Adenine deaminase (548 aa).

Belongs to the metallo-dependent hydrolases superfamily. Adenine deaminase family. Mn(2+) is required as a cofactor.

It carries out the reaction adenine + H2O + H(+) = hypoxanthine + NH4(+). In Borreliella afzelii (strain PKo) (Borrelia afzelii), this protein is Adenine deaminase.